Consider the following 586-residue polypeptide: Aspartate--tRNA ligase (586 aa).

Glu-171 is an L-aspartate binding site. Residues 195–198 are aspartate; sequence QLFK. Residue Arg-217 participates in L-aspartate binding. Residues 217–219 and Gln-226 each bind ATP; that span reads RDE. His-448 is an L-aspartate binding site. Glu-482 contributes to the ATP binding site. Arg-489 lines the L-aspartate pocket. 534 to 537 is a binding site for ATP; that stretch reads GLDR.

The protein belongs to the class-II aminoacyl-tRNA synthetase family. Type 1 subfamily. As to quaternary structure, homodimer.

The protein localises to the cytoplasm. It catalyses the reaction tRNA(Asp) + L-aspartate + ATP = L-aspartyl-tRNA(Asp) + AMP + diphosphate. Catalyzes the attachment of L-aspartate to tRNA(Asp) in a two-step reaction: L-aspartate is first activated by ATP to form Asp-AMP and then transferred to the acceptor end of tRNA(Asp). This chain is Aspartate--tRNA ligase, found in Buchnera aphidicola subsp. Acyrthosiphon pisum (strain APS) (Acyrthosiphon pisum symbiotic bacterium).